The primary structure comprises 202 residues: Heart- and neural crest derivatives-expressed protein 1 (202 aa).

The bHLH domain occupies 83–135 (RKGVGGPKKERRRTESINSAFAELRECIPNVPADTKLSKIKTLRLATSYIAYL). The disordered stretch occupies residues 143-187 (SQPGEPEGFKAELKKADGRENKRKRETQPEVYSQPLAHGEKKLKG). A compositionally biased stretch (basic and acidic residues) spans 149–162 (EGFKAELKKADGRE).

In terms of assembly, efficient DNA binding requires dimerization with another bHLH protein.

It localises to the nucleus. It is found in the nucleoplasm. The protein resides in the nucleolus. Functionally, transcription factor. Plays an essential role in cardiac morphogenesis. The sequence is that of Heart- and neural crest derivatives-expressed protein 1 (HAND1) from Gallus gallus (Chicken).